A 171-amino-acid chain; its full sequence is Co-chaperone protein HscB (171 aa).

The J domain occupies 2–74; sequence DYFTLFGLPA…LMRAEYLLSL (73 aa).

The protein belongs to the HscB family. As to quaternary structure, interacts with HscA and stimulates its ATPase activity. Interacts with IscU.

Co-chaperone involved in the maturation of iron-sulfur cluster-containing proteins. Seems to help targeting proteins to be folded toward HscA. The polypeptide is Co-chaperone protein HscB (Shigella flexneri serotype 5b (strain 8401)).